Consider the following 379-residue polypeptide: Dual-specificity RNA methyltransferase RlmN (379 aa).

E95 (proton acceptor) is an active-site residue. A Radical SAM core domain is found at E101–D345. Residues C108 and C350 are joined by a disulfide bond. C115, C119, and C122 together coordinate [4Fe-4S] cluster. Residues G176–E177, S208, S230–H232, and N307 each bind S-adenosyl-L-methionine. Catalysis depends on C350, which acts as the S-methylcysteine intermediate.

This sequence belongs to the radical SAM superfamily. RlmN family. [4Fe-4S] cluster is required as a cofactor.

The protein localises to the cytoplasm. It catalyses the reaction adenosine(2503) in 23S rRNA + 2 reduced [2Fe-2S]-[ferredoxin] + 2 S-adenosyl-L-methionine = 2-methyladenosine(2503) in 23S rRNA + 5'-deoxyadenosine + L-methionine + 2 oxidized [2Fe-2S]-[ferredoxin] + S-adenosyl-L-homocysteine. The catalysed reaction is adenosine(37) in tRNA + 2 reduced [2Fe-2S]-[ferredoxin] + 2 S-adenosyl-L-methionine = 2-methyladenosine(37) in tRNA + 5'-deoxyadenosine + L-methionine + 2 oxidized [2Fe-2S]-[ferredoxin] + S-adenosyl-L-homocysteine. Specifically methylates position 2 of adenine 2503 in 23S rRNA and position 2 of adenine 37 in tRNAs. m2A2503 modification seems to play a crucial role in the proofreading step occurring at the peptidyl transferase center and thus would serve to optimize ribosomal fidelity. The polypeptide is Dual-specificity RNA methyltransferase RlmN (Burkholderia cenocepacia (strain ATCC BAA-245 / DSM 16553 / LMG 16656 / NCTC 13227 / J2315 / CF5610) (Burkholderia cepacia (strain J2315))).